The chain runs to 83 residues: Small ribosomal subunit protein bS16 (83 aa).

The protein belongs to the bacterial ribosomal protein bS16 family.

The protein is Small ribosomal subunit protein bS16 of Thermosynechococcus vestitus (strain NIES-2133 / IAM M-273 / BP-1).